The following is a 360-amino-acid chain: Peptide chain release factor 1 (360 aa).

Position 237 is an N5-methylglutamine (glutamine 237).

This sequence belongs to the prokaryotic/mitochondrial release factor family. In terms of processing, methylated by PrmC. Methylation increases the termination efficiency of RF1.

It localises to the cytoplasm. In terms of biological role, peptide chain release factor 1 directs the termination of translation in response to the peptide chain termination codons UAG and UAA. The chain is Peptide chain release factor 1 from Pseudomonas putida (strain ATCC 700007 / DSM 6899 / JCM 31910 / BCRC 17059 / LMG 24140 / F1).